The chain runs to 278 residues: uncharacterized protein (278 aa).

At 1–34 (MAKTIKVIRKKDPKKKNLSDPLAKQKLVWKIGHV) the chain is on the cytoplasmic side. The helical transmembrane segment at 35–55 (LTLVFGLLFSITYFYHVLIFF) threads the bilayer. Over 56–129 (KYRSWKWLFL…DLLSSENFHT (74 aa)) the chain is Extracellular. Residues 130–150 (LLIACLWFFGGGKSFYKILPY) form a helical membrane-spanning segment. Over 151 to 180 (MILSYLHLTKMNYELNANKEEKIPLTPKDR) the chain is Cytoplasmic. Residues 181-201 (KMLHLLAYSELLVILALTLDT) traverse the membrane as a helical segment. Residues 202–205 (ILFK) are Extracellular-facing. Residues 206 to 222 (TGTSGFMLVIYVGIYWL) traverse the membrane as a helical segment. The Cytoplasmic segment spans residues 223–278 (RLNFSPYAQVAVLELLVKFEKYVPKKYRDKWQVIKNFIYMKMKEHEKRTEEVARYA).

It localises to the cell membrane. This is an uncharacterized protein from Saccharomyces cerevisiae (strain ATCC 204508 / S288c) (Baker's yeast).